A 261-amino-acid chain; its full sequence is MTHQTHAYHTVNPSPWPLTGALSALLMTSGLIMWFHFNSPLLLVLGLTTNFLTMYQWWRDIIRESTFQGHHTTIVQKGLRYGMILFIVSEVFFFAGFFWAFYHSSLAPTPELGGCWPPTGINPLNPLEVPLLNTSVLLASGVSITWAHHSLMEGHRKHMLQALFITIALGVYFTLLQASEYYEAPFTISDGIYGSTFFVATGFHGLHVIIGSSFLIVCFMRQLKFHFTSSHHFGFEAAAWYWHFVDVVWLFLYVSIYWWGS.

At 1-15 (MTHQTHAYHTVNPSP) the chain is on the mitochondrial matrix side. A helical membrane pass occupies residues 16 to 34 (WPLTGALSALLMTSGLIMW). Residues 35-40 (FHFNSP) are Mitochondrial intermembrane-facing. Residues 41-66 (LLLVLGLTTNFLTMYQWWRDIIREST) form a helical membrane-spanning segment. Residues 67–72 (FQGHHT) are Mitochondrial matrix-facing. The helical transmembrane segment at 73-105 (TIVQKGLRYGMILFIVSEVFFFAGFFWAFYHSS) threads the bilayer. The Mitochondrial intermembrane portion of the chain corresponds to 106–128 (LAPTPELGGCWPPTGINPLNPLE). A helical transmembrane segment spans residues 129 to 152 (VPLLNTSVLLASGVSITWAHHSLM). Over 153-155 (EGH) the chain is Mitochondrial matrix. The chain crosses the membrane as a helical span at residues 156 to 183 (RKHMLQALFITIALGVYFTLLQASEYYE). Residues 184 to 190 (APFTISD) lie on the Mitochondrial intermembrane side of the membrane. A helical transmembrane segment spans residues 191–223 (GIYGSTFFVATGFHGLHVIIGSSFLIVCFMRQL). Over 224 to 232 (KFHFTSSHH) the chain is Mitochondrial matrix. The helical transmembrane segment at 233 to 256 (FGFEAAAWYWHFVDVVWLFLYVSI) threads the bilayer. Topologically, residues 257 to 261 (YWWGS) are mitochondrial intermembrane.

This sequence belongs to the cytochrome c oxidase subunit 3 family. Component of the cytochrome c oxidase (complex IV, CIV), a multisubunit enzyme composed of 14 subunits. The complex is composed of a catalytic core of 3 subunits MT-CO1, MT-CO2 and MT-CO3, encoded in the mitochondrial DNA, and 11 supernumerary subunits COX4I, COX5A, COX5B, COX6A, COX6B, COX6C, COX7A, COX7B, COX7C, COX8 and NDUFA4, which are encoded in the nuclear genome. The complex exists as a monomer or a dimer and forms supercomplexes (SCs) in the inner mitochondrial membrane with NADH-ubiquinone oxidoreductase (complex I, CI) and ubiquinol-cytochrome c oxidoreductase (cytochrome b-c1 complex, complex III, CIII), resulting in different assemblies (supercomplex SCI(1)III(2)IV(1) and megacomplex MCI(2)III(2)IV(2)).

It localises to the mitochondrion inner membrane. The catalysed reaction is 4 Fe(II)-[cytochrome c] + O2 + 8 H(+)(in) = 4 Fe(III)-[cytochrome c] + 2 H2O + 4 H(+)(out). Component of the cytochrome c oxidase, the last enzyme in the mitochondrial electron transport chain which drives oxidative phosphorylation. The respiratory chain contains 3 multisubunit complexes succinate dehydrogenase (complex II, CII), ubiquinol-cytochrome c oxidoreductase (cytochrome b-c1 complex, complex III, CIII) and cytochrome c oxidase (complex IV, CIV), that cooperate to transfer electrons derived from NADH and succinate to molecular oxygen, creating an electrochemical gradient over the inner membrane that drives transmembrane transport and the ATP synthase. Cytochrome c oxidase is the component of the respiratory chain that catalyzes the reduction of oxygen to water. Electrons originating from reduced cytochrome c in the intermembrane space (IMS) are transferred via the dinuclear copper A center (CU(A)) of subunit 2 and heme A of subunit 1 to the active site in subunit 1, a binuclear center (BNC) formed by heme A3 and copper B (CU(B)). The BNC reduces molecular oxygen to 2 water molecules using 4 electrons from cytochrome c in the IMS and 4 protons from the mitochondrial matrix. This Dasypus novemcinctus (Nine-banded armadillo) protein is Cytochrome c oxidase subunit 3 (MT-CO3).